Consider the following 101-residue polypeptide: Small ribosomal subunit protein bS16 (101 aa).

It belongs to the bacterial ribosomal protein bS16 family.

The sequence is that of Small ribosomal subunit protein bS16 from Ureaplasma parvum serovar 3 (strain ATCC 700970).